Reading from the N-terminus, the 293-residue chain is Acetylglutamate kinase (293 aa).

Residues 71–72 (GG), arginine 93, and asparagine 186 contribute to the substrate site.

Belongs to the acetylglutamate kinase family. ArgB subfamily.

It is found in the cytoplasm. It catalyses the reaction N-acetyl-L-glutamate + ATP = N-acetyl-L-glutamyl 5-phosphate + ADP. Its pathway is amino-acid biosynthesis; L-arginine biosynthesis; N(2)-acetyl-L-ornithine from L-glutamate: step 2/4. In terms of biological role, catalyzes the ATP-dependent phosphorylation of N-acetyl-L-glutamate. The polypeptide is Acetylglutamate kinase (Synechococcus sp. (strain WH7803)).